Here is a 47-residue protein sequence, read N- to C-terminus: Ruminococcin-A (47 aa).

The N-terminal stretch at M1–G23 is a signal peptide. 2,3-didehydrobutyrine occurs at positions 30 and 39. Positions T30–C35 form a cross-link, beta-methyllanthionine (Thr-Cys). The lanthionine (Ser-Cys) cross-link spans S32–C46. Residues T45–C47 constitute a cross-link (beta-methyllanthionine (Thr-Cys)).

Maturation of lantibiotics involves the enzymatic conversion of Thr, and Ser into dehydrated AA and the formation of thioether bonds with cysteine. This is followed by membrane translocation and cleavage of the modified precursor. In terms of processing, it is not established whether the 2,3-didehydrobutyrine is the E- or Z-isomer.

The protein localises to the secreted. In terms of biological role, lanthionine-containing peptide antibiotic (lantibiotic) active on Gram-positive bacteria. The bactericidal activity of lantibiotics is based on depolarization of energized bacterial cytoplasmic membranes, initiated by the formation of aqueous transmembrane pores. Ruminococcin A is a broad spectrum bacteriocin exhibiting activity against a wide range of pathogenic clostridia and B.longum. The sequence is that of Ruminococcin-A (rumA1) from Mediterraneibacter gnavus (Ruminococcus gnavus).